Consider the following 173-residue polypeptide: Crossover junction endodeoxyribonuclease RuvC (173 aa).

Catalysis depends on residues aspartate 8, glutamate 67, and aspartate 139. Residues aspartate 8, glutamate 67, and aspartate 139 each coordinate Mg(2+).

This sequence belongs to the RuvC family. In terms of assembly, homodimer which binds Holliday junction (HJ) DNA. The HJ becomes 2-fold symmetrical on binding to RuvC with unstacked arms; it has a different conformation from HJ DNA in complex with RuvA. In the full resolvosome a probable DNA-RuvA(4)-RuvB(12)-RuvC(2) complex forms which resolves the HJ. Requires Mg(2+) as cofactor.

Its subcellular location is the cytoplasm. It catalyses the reaction Endonucleolytic cleavage at a junction such as a reciprocal single-stranded crossover between two homologous DNA duplexes (Holliday junction).. Functionally, the RuvA-RuvB-RuvC complex processes Holliday junction (HJ) DNA during genetic recombination and DNA repair. Endonuclease that resolves HJ intermediates. Cleaves cruciform DNA by making single-stranded nicks across the HJ at symmetrical positions within the homologous arms, yielding a 5'-phosphate and a 3'-hydroxyl group; requires a central core of homology in the junction. The consensus cleavage sequence is 5'-(A/T)TT(C/G)-3'. Cleavage occurs on the 3'-side of the TT dinucleotide at the point of strand exchange. HJ branch migration catalyzed by RuvA-RuvB allows RuvC to scan DNA until it finds its consensus sequence, where it cleaves and resolves the cruciform DNA. This chain is Crossover junction endodeoxyribonuclease RuvC, found in Vibrio parahaemolyticus serotype O3:K6 (strain RIMD 2210633).